Consider the following 631-residue polypeptide: Peptide-N(4)-(N-acetyl-beta-glucosaminyl)asparagine amidase (631 aa).

One can recognise a PUB domain in the interval 34–97; it reads EAVRILLVLL…PSSNAYTLPT (64 aa). The residue at position 126 (S126) is a Phosphoserine. Zn(2+)-binding residues include C246, C249, C272, and C273. Residue C296 is the Nucleophile of the active site. Active-site residues include H323 and D340. Residues 441 to 631 form the PAW domain; that stretch reads ELKGRSSGSL…YPFDLQVQLH (191 aa).

This sequence belongs to the transglutaminase-like superfamily. PNGase family. Zn(2+) is required as a cofactor.

It is found in the cytoplasm. It carries out the reaction Hydrolysis of an N(4)-(acetyl-beta-D-glucosaminyl)asparagine residue in which the glucosamine residue may be further glycosylated, to yield a (substituted) N-acetyl-beta-D-glucosaminylamine and a peptide containing an aspartate residue.. Functionally, specifically deglycosylates the denatured form of N-linked glycoproteins in the cytoplasm and assists their proteasome-mediated degradation. Cleaves the beta-aspartyl-glucosamine (GlcNAc) of the glycan and the amide side chain of Asn, converting Asn to Asp. Prefers proteins containing high-mannose over those bearing complex type oligosaccharides. Can recognize misfolded proteins in the endoplasmic reticulum that are exported to the cytosol to be destroyed and deglycosylate them, while it has no activity toward native proteins. Deglycosylation is a prerequisite for subsequent proteasome-mediated degradation of some, but not all, misfolded glycoproteins. This Drosophila melanogaster (Fruit fly) protein is Peptide-N(4)-(N-acetyl-beta-glucosaminyl)asparagine amidase (Pngl).